Reading from the N-terminus, the 745-residue chain is Putative cryptochrome DASH, mitochondrial (745 aa).

Residues 1–22 constitute a mitochondrion transit peptide; that stretch reads MAPSKVVIYAMRRELRLSDNPI. Residues 23 to 166 form the Photolyase/cryptochrome alpha/beta domain; the sequence is FHHLSNPESK…DFKLWDDEKY (144 aa). Disordered regions lie at residues 563 to 688 and 702 to 745; these read KFNL…GGGG and GGYR…QTDA. Residues 571–584 are compositionally biased toward basic residues; it reads SKVKKRPFFRKRGT. Residues 591-603 show a composition bias toward low complexity; the sequence is GSAESPGSSDSHS. Residues 604–616 show a composition bias toward gly residues; it reads GSGGSPDGSGGGN. Residues 632–648 show a composition bias toward low complexity; it reads QQTHQGSGRSQSSSNHG. Gly residues-rich tracts occupy residues 672–688 and 702–718; these read RGGGGGRGGRGGRGGGG and GGYRGGGRGRGGGGGFR. Residues 735–745 show a composition bias toward polar residues; it reads QQVASQFQTDA.

Belongs to the DNA photolyase class-1 family. FAD serves as cofactor. It depends on (6R)-5,10-methylene-5,6,7,8-tetrahydrofolate as a cofactor.

The protein localises to the mitochondrion. Functionally, may have a photoreceptor function. This chain is Putative cryptochrome DASH, mitochondrial (cry), found in Neurospora crassa (strain ATCC 24698 / 74-OR23-1A / CBS 708.71 / DSM 1257 / FGSC 987).